A 423-amino-acid polypeptide reads, in one-letter code: Immunity-related GTPase family M protein 3 (423 aa).

In terms of domain architecture, IRG-type G spans 83–260; sequence YRVKIAVTGD…PELRNTLQKD (178 aa). GTP contacts are provided by residues 92–99, 117–121, and 200–202; these read DSGNGMSS, TGVVR, and KLD.

This sequence belongs to the TRAFAC class dynamin-like GTPase superfamily. IRG family.

Its subcellular location is the endoplasmic reticulum. It localises to the cytoplasmic vesicle membrane. The protein resides in the lipid droplet. The catalysed reaction is GTP + H2O = GDP + phosphate + H(+). Immunity-related GTPase that plays important roles in host resistance to acute infection by protozoan, such as Toxoplasma gondii and Leishmania major. Acts as a dynamin-like protein that binds to intracellular membranes and promotes remodeling and trafficking of those membranes. Acts predominantly to restrict acute protozoan infection: expression is required in both hematopoietic and non-hematopoietic cellular compartments and is dependent on Stat1. Only plays a partial role in the control of latent Toxoplasma infection. Involved in the clearance of acute protozoan infections by regulating autophagy, possibly by promoting the fusion of phagosomes with lysosomes for efficient degradation of vacuoles containing parasites. Probably involved in membrane disruption of parasite-containing vacuoles. In addition to its role in resistance to acute infection by protozoan, also acts as a negative regulator of the integrated stress response (ISR) following coxsackievirus B3 infection. Promotes differentiation of activated CD8(+) T-cells. The polypeptide is Immunity-related GTPase family M protein 3 (Mus musculus (Mouse)).